The primary structure comprises 183 residues: Threonylcarbamoyl-AMP synthase (183 aa).

Residues 1 to 183 enclose the YrdC-like domain; it reads MNIQQIVEQL…LFTHQLFRQG (183 aa).

This sequence belongs to the SUA5 family. TsaC subfamily.

It localises to the cytoplasm. The enzyme catalyses L-threonine + hydrogencarbonate + ATP = L-threonylcarbamoyladenylate + diphosphate + H2O. Functionally, required for the formation of a threonylcarbamoyl group on adenosine at position 37 (t(6)A37) in tRNAs that read codons beginning with adenine. Catalyzes the conversion of L-threonine, HCO(3)(-)/CO(2) and ATP to give threonylcarbamoyl-AMP (TC-AMP) as the acyladenylate intermediate, with the release of diphosphate. The sequence is that of Threonylcarbamoyl-AMP synthase from Pasteurella multocida (strain Pm70).